A 198-amino-acid chain; its full sequence is NAD(P)H dehydrogenase (quinone) (198 aa).

A Flavodoxin-like domain is found at 4 to 189 (VLVLYYSMYG…ALARYQGRHV (186 aa)). FMN is bound by residues 10–15 (SMYGHV) and 78–80 (TRF). Tyr-12 contacts NAD(+). Trp-98 is a binding site for substrate. Residues 113–118 (STGTGG) and His-133 contribute to the FMN site.

Belongs to the WrbA family. FMN serves as cofactor.

The enzyme catalyses a quinone + NADH + H(+) = a quinol + NAD(+). It catalyses the reaction a quinone + NADPH + H(+) = a quinol + NADP(+). This is NAD(P)H dehydrogenase (quinone) from Halorhodospira halophila (strain DSM 244 / SL1) (Ectothiorhodospira halophila (strain DSM 244 / SL1)).